The chain runs to 123 residues: Large ribosomal subunit protein bL12 (123 aa).

The protein belongs to the bacterial ribosomal protein bL12 family. As to quaternary structure, homodimer. Part of the ribosomal stalk of the 50S ribosomal subunit. Forms a multimeric L10(L12)X complex, where L10 forms an elongated spine to which 2 to 4 L12 dimers bind in a sequential fashion. Binds GTP-bound translation factors.

In terms of biological role, forms part of the ribosomal stalk which helps the ribosome interact with GTP-bound translation factors. Is thus essential for accurate translation. This is Large ribosomal subunit protein bL12 from Ectopseudomonas mendocina (strain ymp) (Pseudomonas mendocina).